Consider the following 463-residue polypeptide: Probable diacyglycerol O-acyltransferase tgs1 (463 aa).

Position 1 is an N-acetylmethionine (methionine 1). Histidine 137 (proton acceptor) is an active-site residue.

Belongs to the long-chain O-acyltransferase family.

The catalysed reaction is an acyl-CoA + a 1,2-diacyl-sn-glycerol = a triacyl-sn-glycerol + CoA. It carries out the reaction di-(9Z)-octadecenoylglycerol + (9Z)-octadecenoyl-CoA = 1,2,3-tri-(9Z-octadecenoyl)-glycerol + CoA. The protein operates within glycerolipid metabolism; triacylglycerol biosynthesis. Catalyzes the terminal and only committed step in triacylglycerol synthesis by using diacylglycerol and fatty acyl CoA as substrates. Required for storage lipid synthesis. Its function is as follows. Upon expression in E.coli functions as a triacylglycerol synthase, making triacylglycerol (TG) from diolein and long-chain fatty acyl-CoA. Prefers C(26:0)-CoA over C(18:1)-CoA. TG synthesis activity increases in M.tuberculosis upon oxygen depletion and NO treatment, with concomitant accumulation of TG in inclusion bodies. As disruption of the gene encoding this protein obviates TG synthesis this seems to be the major enzyme involved in production of TG. Has no wax synthase activity to produce wax esters. The chain is Probable diacyglycerol O-acyltransferase tgs1 (tgs1) from Mycobacterium tuberculosis (strain ATCC 25618 / H37Rv).